We begin with the raw amino-acid sequence, 215 residues long: Peroxiredoxin 1 (215 aa).

A Thioredoxin domain is found at 2 to 158; that stretch reads VKLYSKFPDV…LLRITKAAIV (157 aa). Residue cysteine 46 is the Cysteine sulfenic acid (-SOH) intermediate of the active site. Position 121 (arginine 121) interacts with substrate.

Belongs to the peroxiredoxin family. Prx6 subfamily. As to quaternary structure, homodecamer. Pentamer of dimers that assemble into a ring structure.

It is found in the cytoplasm. It carries out the reaction a hydroperoxide + [thioredoxin]-dithiol = an alcohol + [thioredoxin]-disulfide + H2O. Its function is as follows. Thiol-specific peroxidase that catalyzes the reduction of hydrogen peroxide and organic hydroperoxides to water and alcohols, respectively. Plays a role in cell protection against oxidative stress by detoxifying peroxides. In Sulfurisphaera tokodaii (strain DSM 16993 / JCM 10545 / NBRC 100140 / 7) (Sulfolobus tokodaii), this protein is Peroxiredoxin 1.